The primary structure comprises 148 residues: Large-conductance mechanosensitive channel (148 aa).

2 consecutive transmembrane segments (helical) span residues 12-32 and 85-105; these read AFAM…GGAF and GQFL…FLFI.

This sequence belongs to the MscL family. Homopentamer.

The protein resides in the cell inner membrane. Channel that opens in response to stretch forces in the membrane lipid bilayer. May participate in the regulation of osmotic pressure changes within the cell. This Bacteroides thetaiotaomicron (strain ATCC 29148 / DSM 2079 / JCM 5827 / CCUG 10774 / NCTC 10582 / VPI-5482 / E50) protein is Large-conductance mechanosensitive channel.